We begin with the raw amino-acid sequence, 557 residues long: Anti-Muellerian hormone type-2 receptor (557 aa).

The signal sequence occupies residues 1–17 (MLGTLGLWTLLPAAAQV). Over 18-144 (SPNRRTCVFF…QEPQATPGGP (127 aa)) the chain is Extracellular. 2 disulfides stabilise this stretch: C55-C79 and C92-C109. N-linked (GlcNAc...) asparagine glycosylation occurs at N66. The N-linked (GlcNAc...) asparagine glycan is linked to N119. Residues 145–165 (IWMAQLLLGVFLVLLLSIIIL) form a helical membrane-spanning segment. Residues 166 to 557 (ALLQRKACRV…SVQQGSGSKS (392 aa)) are Cytoplasmic-facing. The Protein kinase domain occupies 201–511 (LRFSQVIQEG…RLAALAYPQV (311 aa)). ATP is bound by residues 207–215 (IQEGGHAVV) and K228. D331 functions as the Proton acceptor in the catalytic mechanism.

It belongs to the protein kinase superfamily. TKL Ser/Thr protein kinase family. TGFB receptor subfamily. In terms of assembly, interacts with type I receptor ACVR1. Mg(2+) serves as cofactor. It depends on Mn(2+) as a cofactor.

Its subcellular location is the membrane. The catalysed reaction is L-threonyl-[receptor-protein] + ATP = O-phospho-L-threonyl-[receptor-protein] + ADP + H(+). The enzyme catalyses L-seryl-[receptor-protein] + ATP = O-phospho-L-seryl-[receptor-protein] + ADP + H(+). In terms of biological role, on ligand binding, forms a receptor complex consisting of two type II and two type I transmembrane serine/threonine kinases. Type II receptors phosphorylate and activate type I receptors which autophosphorylate, then bind and activate SMAD transcriptional regulators. Receptor for anti-Muellerian hormone. The chain is Anti-Muellerian hormone type-2 receptor (Amhr2) from Rattus norvegicus (Rat).